The sequence spans 223 residues: Urease accessory protein UreF (223 aa).

Belongs to the UreF family. As to quaternary structure, ureD, UreF and UreG form a complex that acts as a GTP-hydrolysis-dependent molecular chaperone, activating the urease apoprotein by helping to assemble the nickel containing metallocenter of UreC. The UreE protein probably delivers the nickel.

The protein resides in the cytoplasm. Functionally, required for maturation of urease via the functional incorporation of the urease nickel metallocenter. The chain is Urease accessory protein UreF from Pseudomonas aeruginosa (strain LESB58).